We begin with the raw amino-acid sequence, 128 residues long: Large ribosomal subunit protein eL8 (128 aa).

This sequence belongs to the eukaryotic ribosomal protein eL8 family. Part of the 50S ribosomal subunit. Probably part of the RNase P complex.

The protein localises to the cytoplasm. Its function is as follows. Multifunctional RNA-binding protein that recognizes the K-turn motif in ribosomal RNA, the RNA component of RNase P, box H/ACA, box C/D and box C'/D' sRNAs. This chain is Large ribosomal subunit protein eL8, found in Ignicoccus hospitalis (strain KIN4/I / DSM 18386 / JCM 14125).